A 349-amino-acid polypeptide reads, in one-letter code: tRNA N6-adenosine threonylcarbamoyltransferase (349 aa).

Fe cation-binding residues include H116 and H120. Substrate is bound by residues 139–143 (LVSGG), D172, G185, and N283. D311 is a Fe cation binding site.

The protein belongs to the KAE1 / TsaD family. Fe(2+) serves as cofactor.

It is found in the cytoplasm. The catalysed reaction is L-threonylcarbamoyladenylate + adenosine(37) in tRNA = N(6)-L-threonylcarbamoyladenosine(37) in tRNA + AMP + H(+). Functionally, required for the formation of a threonylcarbamoyl group on adenosine at position 37 (t(6)A37) in tRNAs that read codons beginning with adenine. Is involved in the transfer of the threonylcarbamoyl moiety of threonylcarbamoyl-AMP (TC-AMP) to the N6 group of A37, together with TsaE and TsaB. TsaD likely plays a direct catalytic role in this reaction. The protein is tRNA N6-adenosine threonylcarbamoyltransferase of Colwellia psychrerythraea (strain 34H / ATCC BAA-681) (Vibrio psychroerythus).